The following is a 218-amino-acid chain: Serine/threonine-protein phosphatase 2 (218 aa).

Mn(2+)-binding residues include aspartate 22, histidine 24, aspartate 51, and asparagine 77. Histidine 78 acts as the Proton donor in catalysis. A Mn(2+)-binding site is contributed by histidine 187.

This sequence belongs to the PPP phosphatase family. Requires Mn(2+) as cofactor.

The catalysed reaction is O-phospho-L-seryl-[protein] + H2O = L-seryl-[protein] + phosphate. The enzyme catalyses O-phospho-L-threonyl-[protein] + H2O = L-threonyl-[protein] + phosphate. Has been shown, in vitro, to act on Ser, Thr and Tyr-phosphorylated substrates. The protein is Serine/threonine-protein phosphatase 2 (pphB) of Escherichia coli (strain K12).